Here is a 207-residue protein sequence, read N- to C-terminus: Acyl-homoserine-lactone synthase (207 aa).

This sequence belongs to the autoinducer synthase family.

The catalysed reaction is a fatty acyl-[ACP] + S-adenosyl-L-methionine = an N-acyl-L-homoserine lactone + S-methyl-5'-thioadenosine + holo-[ACP] + H(+). Required for the synthesis of N-butanoyl-L-homoserine lactone (BHL), an autoinducer molecule which binds to AsaR. This Aeromonas salmonicida protein is Acyl-homoserine-lactone synthase (asaI).